Here is a 471-residue protein sequence, read N- to C-terminus: Glutamate--tRNA ligase (471 aa).

The 'HIGH' region motif lies at 9–19; that stretch reads PSPTGYLHVGG. Zn(2+) is bound by residues Cys98, Cys100, Cys125, and His127. Positions 237-241 match the 'KMSKS' region motif; it reads KLSKR. An ATP-binding site is contributed by Lys240.

Belongs to the class-I aminoacyl-tRNA synthetase family. Glutamate--tRNA ligase type 1 subfamily. Monomer. Requires Zn(2+) as cofactor.

The protein localises to the cytoplasm. It carries out the reaction tRNA(Glu) + L-glutamate + ATP = L-glutamyl-tRNA(Glu) + AMP + diphosphate. Its function is as follows. Catalyzes the attachment of glutamate to tRNA(Glu) in a two-step reaction: glutamate is first activated by ATP to form Glu-AMP and then transferred to the acceptor end of tRNA(Glu). The protein is Glutamate--tRNA ligase of Salmonella enteritidis PT4 (strain P125109).